An 82-amino-acid chain; its full sequence is MNIHEQKITPECLEKAANQVEDKREEYKDVLLQLKKMLGGTTPHSETAEILTRAYEQMKEYALFVQSIETFLRKSANNLKIK.

This is an uncharacterized protein from Bacillus subtilis (strain 168).